The primary structure comprises 1200 residues: Ice nucleation protein (1200 aa).

The segment at 176–1151 (ATYGSTLSGD…LSAGEDSILI (976 aa)) is octapeptide periodicity.

It belongs to the bacterial ice nucleation protein family.

It is found in the cell outer membrane. Its function is as follows. Ice nucleation proteins enable bacteria to nucleate crystallization in supercooled water. This is Ice nucleation protein (inaZ) from Pseudomonas syringae pv. syringae.